The sequence spans 1252 residues: DNA-directed RNA polymerase subunit beta (1252 aa).

It belongs to the RNA polymerase beta chain family. As to quaternary structure, the RNAP catalytic core consists of 2 alpha, 1 beta, 1 beta' and 1 omega subunit. When a sigma factor is associated with the core the holoenzyme is formed, which can initiate transcription.

The enzyme catalyses RNA(n) + a ribonucleoside 5'-triphosphate = RNA(n+1) + diphosphate. Functionally, DNA-dependent RNA polymerase catalyzes the transcription of DNA into RNA using the four ribonucleoside triphosphates as substrates. The sequence is that of DNA-directed RNA polymerase subunit beta from Chlamydia pneumoniae (Chlamydophila pneumoniae).